Consider the following 194-residue polypeptide: A-type ATP synthase subunit E (194 aa).

It belongs to the V-ATPase E subunit family. As to quaternary structure, has multiple subunits with at least A(3), B(3), C, D, E, F, H, I and proteolipid K(x).

Its subcellular location is the cell membrane. Its function is as follows. Component of the A-type ATP synthase that produces ATP from ADP in the presence of a proton gradient across the membrane. The polypeptide is A-type ATP synthase subunit E (Saccharolobus islandicus (strain M.16.27) (Sulfolobus islandicus)).